The following is a 256-amino-acid chain: uncharacterized protein (256 aa).

The signal sequence occupies residues 1–24 (MIKRVNKLVLGISLLFLVISITAG). A lipid anchor (N-palmitoyl cysteine) is attached at C25. Residue C25 is the site of S-diacylglycerol cysteine attachment.

Belongs to the staphylococcal tandem lipoprotein family.

It is found in the cell membrane. This is an uncharacterized protein from Staphylococcus aureus (strain MW2).